Reading from the N-terminus, the 226-residue chain is Uracil phosphoribosyltransferase (226 aa).

36 to 40 provides a ligand contact to GTP; sequence KGLVK. 5-phospho-alpha-D-ribose 1-diphosphate contacts are provided by residues arginine 86, arginine 111, and 145 to 153; that span reads DPMLATGST. Residues isoleucine 211 and 216-218 contribute to the uracil site; that span reads GDA. Residue aspartate 217 participates in 5-phospho-alpha-D-ribose 1-diphosphate binding.

Belongs to the UPRTase family. The cofactor is Mg(2+).

The catalysed reaction is UMP + diphosphate = 5-phospho-alpha-D-ribose 1-diphosphate + uracil. Its pathway is pyrimidine metabolism; UMP biosynthesis via salvage pathway; UMP from uracil: step 1/1. Allosterically activated by GTP. Its function is as follows. Catalyzes the conversion of uracil and 5-phospho-alpha-D-ribose 1-diphosphate (PRPP) to UMP and diphosphate. The chain is Uracil phosphoribosyltransferase from Haloquadratum walsbyi (strain DSM 16790 / HBSQ001).